The primary structure comprises 301 residues: MNNPLPDVALTEVSSALVSLDWVGMQGVEVPVRLAEAGVRYPVHAHVDLQVDLADPSVKGIHMSRLYRLLDRYAEHQILSPDTLGALLEAMVESHLDCHSSRARLTLSFNLLCRRPALITEGLSGWKSYPVKLDATWHAGRLCLDVSADITYSSTCPCSAALSRQLLEGAFTARFGRQSFVDPMQVATWLRENASFATPHSQRSVATVQVRVAEQATELGLMTLIDAVEQALGTPVQTAVKRADEQAFARLNGQNLMYVEDAARKVQQALEGRYAASSVSVRHFESLHPHDAAAQTSNYLS.

The protein belongs to the GTP cyclohydrolase IV family.

It carries out the reaction GTP + H2O = 7,8-dihydroneopterin 3'-triphosphate + formate + H(+). It participates in cofactor biosynthesis; 7,8-dihydroneopterin triphosphate biosynthesis; 7,8-dihydroneopterin triphosphate from GTP: step 1/1. Its function is as follows. Converts GTP to 7,8-dihydroneopterin triphosphate. The polypeptide is GTP cyclohydrolase FolE2 (Pseudomonas savastanoi pv. phaseolicola (strain 1448A / Race 6) (Pseudomonas syringae pv. phaseolicola (strain 1448A / Race 6))).